A 158-amino-acid polypeptide reads, in one-letter code: Troponin C, isoform 1 (158 aa).

Serine 1 is modified (N-acetylserine). 4 EF-hand domains span residues 15–50 (EQIV…MGIK), 51–86 (VSST…FLIE), 91–126 (AMMK…LDAR), and 127–158 (LTAE…MMTG). Residues aspartate 64, aspartate 66, serine 68, glutamine 70, and glutamate 75 each contribute to the Ca(2+) site. Positions 140, 142, 144, 146, and 151 each coordinate Ca(2+).

The protein belongs to the troponin C family.

Its function is as follows. Troponin is the central regulatory protein of striated muscle contraction. Tn consists of three components: Tn-I which is the inhibitor of actomyosin ATPase, Tn-T which contains the binding site for tropomyosin and Tn-C. The binding of calcium to Tn-C abolishes the inhibitory action of Tn on actin filaments. In Balanus nubilus (Giant acorn barnacle), this protein is Troponin C, isoform 1.